Reading from the N-terminus, the 191-residue chain is Transcription factor FapR (191 aa).

One can recognise a MaoC-like domain in the interval Gly102 to Gln169.

This sequence belongs to the FapR family.

Its function is as follows. Transcriptional factor involved in regulation of membrane lipid biosynthesis by repressing genes involved in fatty acid and phospholipid metabolism. The chain is Transcription factor FapR from Shouchella clausii (strain KSM-K16) (Alkalihalobacillus clausii).